A 390-amino-acid polypeptide reads, in one-letter code: tRNA-specific 2-thiouridylase MnmA (390 aa).

ATP is bound by residues 33–40 (AMSGGVDS) and Met59. Cys131 (nucleophile) is an active-site residue. Residues Cys131 and Cys230 are joined by a disulfide bond. Residue Gly155 participates in ATP binding. The interval 180-182 (KDQ) is interaction with tRNA. Catalysis depends on Cys230, which acts as the Cysteine persulfide intermediate.

This sequence belongs to the MnmA/TRMU family.

Its subcellular location is the cytoplasm. It carries out the reaction S-sulfanyl-L-cysteinyl-[protein] + uridine(34) in tRNA + AH2 + ATP = 2-thiouridine(34) in tRNA + L-cysteinyl-[protein] + A + AMP + diphosphate + H(+). Its function is as follows. Catalyzes the 2-thiolation of uridine at the wobble position (U34) of tRNA, leading to the formation of s(2)U34. The polypeptide is tRNA-specific 2-thiouridylase MnmA (Symbiobacterium thermophilum (strain DSM 24528 / JCM 14929 / IAM 14863 / T)).